Here is a 121-residue protein sequence, read N- to C-terminus: Large ribosomal subunit protein uL14c (121 aa).

The protein belongs to the universal ribosomal protein uL14 family. In terms of assembly, part of the 50S ribosomal subunit.

The protein resides in the plastid. It is found in the chloroplast. Its function is as follows. Binds to 23S rRNA. This is Large ribosomal subunit protein uL14c from Nephroselmis olivacea (Green alga).